The chain runs to 156 residues: SsrA-binding protein (156 aa).

It belongs to the SmpB family.

It localises to the cytoplasm. Its function is as follows. Required for rescue of stalled ribosomes mediated by trans-translation. Binds to transfer-messenger RNA (tmRNA), required for stable association of tmRNA with ribosomes. tmRNA and SmpB together mimic tRNA shape, replacing the anticodon stem-loop with SmpB. tmRNA is encoded by the ssrA gene; the 2 termini fold to resemble tRNA(Ala) and it encodes a 'tag peptide', a short internal open reading frame. During trans-translation Ala-aminoacylated tmRNA acts like a tRNA, entering the A-site of stalled ribosomes, displacing the stalled mRNA. The ribosome then switches to translate the ORF on the tmRNA; the nascent peptide is terminated with the 'tag peptide' encoded by the tmRNA and targeted for degradation. The ribosome is freed to recommence translation, which seems to be the essential function of trans-translation. The chain is SsrA-binding protein from Bacillus pumilus (strain SAFR-032).